A 160-amino-acid polypeptide reads, in one-letter code: 3-hydroxyacyl-[acyl-carrier-protein] dehydratase FabZ (160 aa).

His-60 is a catalytic residue.

The protein belongs to the thioester dehydratase family. FabZ subfamily.

It is found in the cytoplasm. It catalyses the reaction a (3R)-hydroxyacyl-[ACP] = a (2E)-enoyl-[ACP] + H2O. Its function is as follows. Involved in unsaturated fatty acids biosynthesis. Catalyzes the dehydration of short chain beta-hydroxyacyl-ACPs and long chain saturated and unsaturated beta-hydroxyacyl-ACPs. The protein is 3-hydroxyacyl-[acyl-carrier-protein] dehydratase FabZ of Rhodospirillum rubrum (strain ATCC 11170 / ATH 1.1.1 / DSM 467 / LMG 4362 / NCIMB 8255 / S1).